Reading from the N-terminus, the 242-residue chain is Ribonuclease PH (242 aa).

Residues arginine 86 and glycine 124–arginine 126 each bind phosphate.

It belongs to the RNase PH family. Homohexameric ring arranged as a trimer of dimers.

It carries out the reaction tRNA(n+1) + phosphate = tRNA(n) + a ribonucleoside 5'-diphosphate. Phosphorolytic 3'-5' exoribonuclease that plays an important role in tRNA 3'-end maturation. Removes nucleotide residues following the 3'-CCA terminus of tRNAs; can also add nucleotides to the ends of RNA molecules by using nucleoside diphosphates as substrates, but this may not be physiologically important. Probably plays a role in initiation of 16S rRNA degradation (leading to ribosome degradation) during starvation. This is Ribonuclease PH from Bacillus pumilus (strain SAFR-032).